A 1039-amino-acid chain; its full sequence is Serine/threonine-protein kinase Tao (1039 aa).

The Protein kinase domain occupies 27–280 (FEDLREIGHG…SAKLLTHAYV (254 aa)). ATP is bound by residues 33–41 (IGHGSFGAV) and lysine 56. Catalysis depends on aspartate 150, which acts as the Proton acceptor. Disordered stretches follow at residues 324 to 457 (SAVG…NSAS), 485 to 508 (GGGGTGTGGSGGGSPASGGPLADR), 629 to 648 (HQQDVERRAKQTSAAEKKLH), and 677 to 707 (WKRELSMDESTPKRQRDLTLQSQKDNLKQHE). Residues 341–350 (SSKSNSITSE) are compositionally biased toward polar residues. Positions 359-376 (SAASSQSSSSNSIPAAAQ) are enriched in low complexity. Basic residues predominate over residues 377 to 387 (NHHHIAAHHHQ). 2 stretches are compositionally biased toward low complexity: residues 388–397 (QAASAAVAAA) and 413–429 (PSGQQGQPVPPGAVSRN). Residues 444–454 (HSMNNNVTPTN) show a composition bias toward polar residues. The segment covering 485-500 (GGGGTGTGGSGGGSPA) has biased composition (gly residues). Coiled-coil stretches lie at residues 631-765 (QDVE…MLLK) and 835-993 (KQFR…DNES). Residues 677–693 (WKRELSMDESTPKRQRD) show a composition bias toward basic and acidic residues.

It belongs to the protein kinase superfamily. STE Ser/Thr protein kinase family. STE20 subfamily. In terms of assembly, interacts with Schip1; the interaction enhances Tao kinase activity. Mg(2+) serves as cofactor. Post-translationally, autophosphorylated. In terms of tissue distribution, in the posterior midgut, expressed in almost all intestinal cell types including intestinal stem cells and enterocytes (at protein level). Maternally expressed, ubiquitously distributed in the egg and early embryo and enriched in the germ plasm at the posterior pole of the early embryo including the pole cells.

Its subcellular location is the cytoplasm. It localises to the cytoskeleton. It is found in the spindle. The protein resides in the membrane. The protein localises to the perikaryon. Its subcellular location is the cell cortex. It localises to the cell projection. It is found in the axon. It carries out the reaction L-seryl-[protein] + ATP = O-phospho-L-seryl-[protein] + ADP + H(+). The catalysed reaction is L-threonyl-[protein] + ATP = O-phospho-L-threonyl-[protein] + ADP + H(+). Functionally, serine/threonine-protein kinase which regulates the Hippo/SWH (Sav/Wts/Hpo) signaling pathway, a signaling pathway that plays a pivotal role in organ size control and tumor suppression by restricting proliferation and promoting apoptosis. The core of this pathway is composed of a kinase cascade wherein Hippo (hpo), in complex with its regulatory protein Salvador (sav), phosphorylates and activates Warts (wts) in complex with its regulatory protein Mats, which in turn phosphorylates and inactivates the Yorkie (yki) oncoprotein. In imaginal cells, phosphorylates and activates hpo and leads to repression of yki. In the midgut, negatively regulates the proliferation of intestinal stem cells through the Hippo/SWH pathway. Independent of the hippo/SWH pathway, regulates epithelial morphogenesis in follicle cells by promoting the endocytosis of Fas2 and reducing lateral adhesion between epithelial cells which, in turn, permits shrinking of the lateral membrane and initiates morphogenesis of the squamous epithelium. Required for the development of both the mushroom body and the ellipsoid body in the brain and may act as a negative regulator of the par-1 kinase. Negatively regulates the JNK pathway which increases sensitivity to ethanol exposure. Plays a role in the control of cell shape by negatively regulating the growth of microtubule plus-ends as they contact the actin-rich cell cortex. Required for the induction of apoptosis in pole cells by promoting expression of skl which enhances activity of the apoptosis activator hid. In terms of biological role, induces in vitro expression of large, highly dynamic, microtubule-dependent lamellopodia-like cytoplasmic expansions which constantly probe the environment. Induces in vitro expression of actin-dependent filopodia-like cytoplasmic protrusions which firmly attach to the substrate. Antagonizes the activity of isoform D. In Drosophila melanogaster (Fruit fly), this protein is Serine/threonine-protein kinase Tao.